The chain runs to 485 residues: N-succinylglutamate 5-semialdehyde dehydrogenase (485 aa).

220–225 (GSANTG) provides a ligand contact to NAD(+). Active-site residues include E243 and C278.

The protein belongs to the aldehyde dehydrogenase family. AstD subfamily.

The catalysed reaction is N-succinyl-L-glutamate 5-semialdehyde + NAD(+) + H2O = N-succinyl-L-glutamate + NADH + 2 H(+). It participates in amino-acid degradation; L-arginine degradation via AST pathway; L-glutamate and succinate from L-arginine: step 4/5. Functionally, catalyzes the NAD-dependent reduction of succinylglutamate semialdehyde into succinylglutamate. This is N-succinylglutamate 5-semialdehyde dehydrogenase from Vibrio campbellii (strain ATCC BAA-1116).